Here is a 59-residue protein sequence, read N- to C-terminus: Large ribosomal subunit protein uL30 (59 aa).

It belongs to the universal ribosomal protein uL30 family. In terms of assembly, part of the 50S ribosomal subunit.

The chain is Large ribosomal subunit protein uL30 from Stutzerimonas stutzeri (strain A1501) (Pseudomonas stutzeri).